The sequence spans 529 residues: Acid-sensing ion channel 1C (529 aa).

The Cytoplasmic portion of the chain corresponds to 1-51 (MTAMKGDSEDSIESMRPSNLQVFANNSTLHGMSHIFAYGHMTFRRFLWTLS). Residues 52 to 68 (FMGSLGLLMYVCMDRVY) traverse the membrane as a helical segment. Residues 69 to 427 (YYFEFPHVTK…EKIEQKKAYE (359 aa)) lie on the Extracellular side of the membrane. N-linked (GlcNAc...) asparagine glycosylation is found at N86, N155, and N161. Disulfide bonds link C95-C196, C174-C181, C292-C367, C310-C363, C314-C361, C323-C345, and C325-C337. The N-linked (GlcNAc...) asparagine glycan is linked to N185. 2 N-linked (GlcNAc...) asparagine glycosylation sites follow: N368 and N395. Residues 428–458 (VAGLLGDIGGQMGLFIGASVLTILEIFDYLY) traverse the membrane as a discontinuously helical segment. The GAS motif; ion selectivity filter signature appears at 444–446 (GAS). The Cytoplasmic segment spans residues 459 to 529 (EVLKDKILGS…PFVVGSNSGK (71 aa)).

The protein belongs to the amiloride-sensitive sodium channel (TC 1.A.6) family. ASIC1 subfamily. Homotrimer. Heterotrimer; with other ASIC proteins producing channel with different properties. Interacts with asic1a. As to expression, expressed in central nervous system.

It is found in the cell membrane. The protein resides in the postsynaptic cell membrane. It localises to the cell projection. Its subcellular location is the dendrite. The enzyme catalyses Na(+)(in) = Na(+)(out). The catalysed reaction is K(+)(in) = K(+)(out). It catalyses the reaction Li(+)(in) = Li(+)(out). It carries out the reaction Ca(2+)(in) = Ca(2+)(out). With respect to regulation, inhibited by the diuretic drug amiloride. Functionally, forms voltage-independent, pH-gated trimeric sodium channels that act as postsynaptic excitatory receptors in the nervous system, playing a crucial role in regulating synaptic plasticity, learning, and memory. Upon extracellular pH drop this channel elicits transient, fast activating, and completely desensitizing inward currents. Displays high selectivity for sodium ions but can also permit the permeation of other cations. The chain is Acid-sensing ion channel 1C from Danio rerio (Zebrafish).